The sequence spans 614 residues: UvrABC system protein C (614 aa).

Residues Thr-14–Ile-91 form the GIY-YIG domain. In terms of domain architecture, UVR spans Asp-196–Leu-231. Residues Leu-595–Pro-614 are disordered. Basic and acidic residues predominate over residues Ala-599 to Pro-614.

Belongs to the UvrC family. In terms of assembly, interacts with UvrB in an incision complex.

The protein resides in the cytoplasm. Functionally, the UvrABC repair system catalyzes the recognition and processing of DNA lesions. UvrC both incises the 5' and 3' sides of the lesion. The N-terminal half is responsible for the 3' incision and the C-terminal half is responsible for the 5' incision. This is UvrABC system protein C from Streptococcus pneumoniae serotype 4 (strain ATCC BAA-334 / TIGR4).